Reading from the N-terminus, the 350-residue chain is uncharacterized protein (350 aa).

The N-terminal stretch at 1–27 (MKNKKRVLIASSLSCAILLLSAATTQA) is a signal peptide. Residues 28–71 (NSAHKDSQDQNKKEHVDKSQQKEKRNVTNKDKNSTVPDDIGKNG) form a disordered region. Positions 30-60 (AHKDSQDQNKKEHVDKSQQKEKRNVTNKDKN) are enriched in basic and acidic residues.

The protein belongs to the aerolysin family.

This is an uncharacterized protein from Staphylococcus aureus (strain MSSA476).